The primary structure comprises 380 residues: Cytochrome b (380 aa).

Helical transmembrane passes span 34–54, 78–99, 114–134, and 179–199; these read FGSL…LLAM, WLIR…YFHI, WNTG…GYVL, and FFAL…IHLT. 2 residues coordinate heme b: His-84 and His-98. 2 residues coordinate heme b: His-183 and His-197. His-202 contributes to the a ubiquinone binding site. The next 4 helical transmembrane spans lie at 227-247, 289-309, 321-341, and 348-368; these read LKDI…ALFS, LGGV…PFLH, LSQL…WVGS, and FIII…VLFP.

The protein belongs to the cytochrome b family. The cytochrome bc1 complex contains 11 subunits: 3 respiratory subunits (MT-CYB, CYC1 and UQCRFS1), 2 core proteins (UQCRC1 and UQCRC2) and 6 low-molecular weight proteins (UQCRH/QCR6, UQCRB/QCR7, UQCRQ/QCR8, UQCR10/QCR9, UQCR11/QCR10 and a cleavage product of UQCRFS1). This cytochrome bc1 complex then forms a dimer. It depends on heme b as a cofactor.

It is found in the mitochondrion inner membrane. Component of the ubiquinol-cytochrome c reductase complex (complex III or cytochrome b-c1 complex) that is part of the mitochondrial respiratory chain. The b-c1 complex mediates electron transfer from ubiquinol to cytochrome c. Contributes to the generation of a proton gradient across the mitochondrial membrane that is then used for ATP synthesis. The polypeptide is Cytochrome b (MT-CYB) (Halobaena caerulea (Blue petrel)).